Here is a 110-residue protein sequence, read N- to C-terminus: N(4)-acetylcytidine amidohydrolase (110 aa).

One can recognise an ASCH domain in the interval 6–93 (TFFERFEQDI…IQEIYPGLEQ (88 aa)). Lysine 20 serves as the catalytic Proton acceptor. Catalysis depends on threonine 23, which acts as the Nucleophile. The active-site Proton donor is the glutamate 73.

This sequence belongs to the N(4)-acetylcytidine amidohydrolase family.

It carries out the reaction N(4)-acetylcytidine + H2O = cytidine + acetate + H(+). The enzyme catalyses N(4)-acetyl-2'-deoxycytidine + H2O = 2'-deoxycytidine + acetate + H(+). The catalysed reaction is N(4)-acetylcytosine + H2O = cytosine + acetate + H(+). Its function is as follows. Catalyzes the hydrolysis of N(4)-acetylcytidine (ac4C). This Shewanella sp. (strain ANA-3) protein is N(4)-acetylcytidine amidohydrolase.